The primary structure comprises 229 residues: Cytidylate kinase (229 aa).

12-20 (GPSGVGKST) is an ATP binding site.

Belongs to the cytidylate kinase family. Type 1 subfamily.

It is found in the cytoplasm. The catalysed reaction is CMP + ATP = CDP + ADP. It catalyses the reaction dCMP + ATP = dCDP + ADP. The polypeptide is Cytidylate kinase (Mesomycoplasma hyopneumoniae (strain 232) (Mycoplasma hyopneumoniae)).